A 1863-amino-acid polypeptide reads, in one-letter code: MDLSALRVEEVQNVINAMQKILECPICLELIKEPVSTKCDHIFCKFCMLKLLNQKKGPSQCPLCKNDITKRSLQESTRFSQLVEELLKIICAFQLDTGLEYANSYNFAKKENNSPEHLKDEVSIIQSMGYRNRAKRLLQSEPENPSLQETSLSVQLSNLGTVRTLRTKQRIQPQKTSVYIELGSDSSEDTVNKATYCSVGDQELLQITPQGTRDEISLDSAKKAACEFSETDVTNTEHHQPSNNDLNTTEKRAAERHPEKYQGSSVSNLHVEPCGTNTHASSLQHENSSLLLTKDRMNVEKAEFCNKSKQPGLARSQHNRWAGSKETCNDRRTPSTEKKVDLNADPLCERKEWNKQKLPCSENPRDTEDVPWITLNSSIQKVNEWFSRSDELLGSDDSHDGESESNAKVADVLDVLNEVDEYSGSSEKIDLLASDPHEALICKSERVHSKSVESNIEDKIFGKTYRKKASLPNLSHVTENLIIGAFVTEPQIIQERPLTNKLKRKRRPTSGLHPEDFIKKADLAVQKTPEMINQGTNQTEQNGQVMNITNSGHENKTKGDSIQNEKNPNPIESLEKESAFKTKAEPISSSISNMELELNIHNSKAPKKNRLRRKSSTRHIHALELVVSRNLSPPNCTELQIDSCSSSEEIKKKKYNQMPVRHSRNLQLMEGKEPATGAKKSNKPNEQTSKRHDSDTFPELKLTNAPGSFTKCSNTSELKEFVNPSLPREEKEEKLETVKVSNNAEDPKDLMLSGERVLQTERSVESSSISLVPGTDYGTQESISLLEVSTLGKAKTEPNKCVSQCAAFENPKGLIHGCSKDNRNDTEGFKYPLGHEVNHSRETSIEMEESELDAQYLQNTFKVSKRQSFAPFSNPGNAEEECATFSAHSGSLKKQSPKVTFECEQKEENQGKNESNIKPVQTVNITAGFPVVGQKDKPVDNAKCSIKGGSRFCLSSQFRGNETGLITPNKHGLLQNPYRIPPLFPIKSFVKTKCKKNLLEENFEEHSMSPEREMGNENIPSTVSTISRNNIRENVFKEASSSNINEVGSSTNEVGSSINEIGSSDENIQAELGRNRGPKLNAMLRLGVLQPEVYKQSLPGSNCKHPEIKKQEYEEVVQTVNTDFSPYLISDNLEQPMGSSHASQVCSETPDDLLDDGEIKEDTSFAENDIKESSAVFSKSVQKGELSRSPSPFTHTHLAQGYRRGAKKLESSEENLSSEDEELPCFQHLLFGKVNNIPSQSTRHSTVATECLSKNTEENLLSLKNSLNDCSNQVILAKASQEHHLSEETKCSASLFSSQCSELEDLTANTNTQDPFLIGSSKQMRHQSESQGVGLSDKELVSDDEERGTGLEENNQEEQSMDSNLGEAASGCESETSVSEDCSGLSSQSDILTTQQRDTMQHNLIKLQQEMAELEAVLEQHGSQPSNSYPSIISDSSALEDLRNPEQSTSEKAVLTSQKSSEYPISQNPEGLSADKFEVSADSSTSKNKEPGVERSSPSKCPSLDDRWYMHSCSGSLQNRNYPSQEELIKVVDVEEQQLEESGPHDLTETSYLPRQDLEGTPYLESGISLFSDDPESDPSEDRAPESARVGNIPSSTSALKVPQLKVAESAQSPAAAHTTDTAGYNAMEESVSREKPELTASTERVNKRMSMVVSGLTPEEFMLVYKFARKHHITLTNLITEETTHVVMKTDAEFVCERTLKYFLGIAGGKWVVSYFWVTQSIKERKMLNEHDFEVRGDVVNGRNHQGPKRARESQDRKIFRGLEICCYGPFTNMPTDQLEWMVQLCGASVVKELSSFTLGTGVHPIVVVQPDAWTEDNGFHAIGQMCEAPVVTREWVLDSVALYQCQELDTYLIPQIPHSHY.

N-acetylmethionine is present on methionine 1. Residues 24–65 form an RING-type zinc finger; that stretch reads CPICLELIKEPVSTKCDHIFCKFCMLKLLNQKKGPSQCPLCK. A Glycyl lysine isopeptide (Lys-Gly) (interchain with G-Cter in SUMO2) cross-link involves residue lysine 109. Serine 114 carries the phosphoserine modification. Positions 230–270 are disordered; that stretch reads ETDVTNTEHHQPSNNDLNTTEKRAAERHPEKYQGSSVSNLH. Residues 248–260 are compositionally biased toward basic and acidic residues; that stretch reads TTEKRAAERHPEK. Residue lysine 301 forms a Glycyl lysine isopeptide (Lys-Gly) (interchain with G-Cter in SUMO2) linkage. Positions 306–338 are disordered; that stretch reads NKSKQPGLARSQHNRWAGSKETCNDRRTPSTEK. Positions 327-338 are enriched in basic and acidic residues; sequence TCNDRRTPSTEK. Residue lysine 339 forms a Glycyl lysine isopeptide (Lys-Gly) (interchain with G-Cter in SUMO2) linkage. Phosphoserine occurs at positions 395, 398, 423, and 434. Residues lysine 443, lysine 459, and lysine 519 each participate in a glycyl lysine isopeptide (Lys-Gly) (interchain with G-Cter in SUMO2) cross-link. Residues 534-544 show a composition bias toward low complexity; sequence QGTNQTEQNGQ. A disordered region spans residues 534–570; it reads QGTNQTEQNGQVMNITNSGHENKTKGDSIQNEKNPNP. Serine 551 is modified (phosphoserine). Glycyl lysine isopeptide (Lys-Gly) (interchain with G-Cter in SUMO2) cross-links involve residues lysine 583 and lysine 654. The interval 654 to 709 is disordered; that stretch reads KYNQMPVRHSRNLQLMEGKEPATGAKKSNKPNEQTSKRHDSDTFPELKLTNAPGSF. Serine 694, serine 708, and serine 725 each carry phosphoserine. Glycyl lysine isopeptide (Lys-Gly) (interchain with G-Cter in SUMO2) cross-links involve residues lysine 734 and lysine 739. Phosphoserine is present on residues serine 753 and serine 840. Residues lysine 918 and lysine 987 each participate in a glycyl lysine isopeptide (Lys-Gly) (interchain with G-Cter in SUMO2) cross-link. Serine 988 carries the phosphoserine; by CHEK2 modification. Residue serine 1009 is modified to Phosphoserine. A Glycyl lysine isopeptide (Lys-Gly) (interchain with G-Cter in SUMO2) cross-link involves residue lysine 1079. Serine 1143 is modified (phosphoserine; by ATR; in vitro). The tract at residues 1181–1216 is disordered; the sequence is VQKGELSRSPSPFTHTHLAQGYRRGAKKLESSEENL. Phosphoserine occurs at positions 1189, 1191, 1211, 1217, and 1218. Residue serine 1280 is modified to Phosphoserine; by ATR; in vitro. Residues 1322–1387 form a disordered region; the sequence is KQMRHQSESQ…VSEDCSGLSS (66 aa). A phosphoserine mark is found at serine 1328, serine 1336, and serine 1342. Polar residues predominate over residues 1373–1387; the sequence is ESETSVSEDCSGLSS. Serine 1387 is modified (phosphoserine; by ATM and ATR). Residue threonine 1394 is modified to Phosphothreonine; by ATR; in vitro. The interaction with PALB2 stretch occupies residues 1397–1424; it reads RDTMQHNLIKLQQEMAELEAVLEQHGSQ. Serine 1423 is modified (phosphoserine; by ATM and ATR). A disordered region spans residues 1440 to 1505; that stretch reads EDLRNPEQST…SSPSKCPSLD (66 aa). The span at 1445–1470 shows a compositional bias: polar residues; that stretch reads PEQSTSEKAVLTSQKSSEYPISQNPE. Serine 1457 is modified (phosphoserine; by ATR; in vitro). Residue serine 1524 is modified to Phosphoserine; by ATM. Serine 1542 is subject to Phosphoserine. A disordered region spans residues 1565–1596; sequence ESGISLFSDDPESDPSEDRAPESARVGNIPSS. 2 BRCT domains span residues 1642–1736 and 1756–1855; these read STER…DFEV and QDRK…TYLI.

As to quaternary structure, heterodimer with BARD1. Part of the BRCA1-associated genome surveillance complex (BASC), which contains BRCA1, MSH2, MSH6, MLH1, ATM, BLM, PMS2 and the MRE11-RAD50-NBN protein (MRN) complex. This association could be a dynamic process changing throughout the cell cycle and within subnuclear domains. Component of the BRCA1-A complex, at least composed of BRCA1, BARD1, UIMC1/RAP80, ABRAXAS1, BRCC3/BRCC36, BABAM2 and BABAM1/NBA1. Interacts (via the BRCT domains) with ABRAXAS1 (phosphorylated form); this is important for recruitment to sites of DNA damage. Can form a heterotetramer with two molecules of ABRAXAS1 (phosphorylated form). Component of the BRCA1-RBBP8 complex. Interacts (via the BRCT domains) with RBBP8 ('Ser-327' phosphorylated form); the interaction ubiquitinates RBBP8, regulates CHEK1 activation, and involves RBBP8 in BRCA1-dependent G2/M checkpoint control on DNA damage. Associates with RNA polymerase II holoenzyme. Interacts with SMC1A, NELFB, DCLRE1C, CLSPN. Interacts with CHEK1, CHEK2, BAP1, BRCC3, UBXN1 and PCLAF. Interacts (via BRCT domains) with BRIP1 (phosphorylated form). Interacts with FANCD2 (ubiquitinated form). Interacts with H2AX (phosphorylated on 'Ser-140'). Interacts (via the BRCT domains) with ACACA (phosphorylated form); the interaction prevents dephosphorylation of ACACA. Part of a BRCA complex containing BRCA1, BRCA2 and PALB2. Interacts directly with PALB2; the interaction is essential for its function in HRR. Interacts directly with BRCA2; the interaction occurs only in the presence of PALB2 which serves as the bridging protein. Interacts (via the BRCT domains) with LMO4; the interaction represses the transcriptional activity of BRCA1. Interacts (via the BRCT domains) with CCAR2 (via N-terminus); the interaction represses the transcriptional activator activity of BRCA1. Interacts with EXD2. Interacts (via C-terminus) with DHX9; this interaction is direct and links BRCA1 to the RNA polymerase II holoenzyme. Interacts with DNA helicase ZGRF1; the interaction is increased following DNA damage induction. Phosphorylated in response to IR, UV, and various stimuli that cause checkpoint activation, probably by ATM or ATR. Phosphorylation at Ser-988 by CHEK2 regulates mitotic spindle assembly. Phosphorylation by AURKA regulates centrosomal microtubule nucleation. In terms of processing, autoubiquitinated, undergoes 'Lys-6'-linked polyubiquitination. 'Lys-6'-linked polyubiquitination does not promote degradation. Isoform 1 and isoform 3 are widely expressed. Isoform 3 is reduced or absent in several breast and ovarian cancer cell lines.

It is found in the nucleus. The protein localises to the chromosome. Its subcellular location is the cytoplasm. The catalysed reaction is S-ubiquitinyl-[E2 ubiquitin-conjugating enzyme]-L-cysteine + [acceptor protein]-L-lysine = [E2 ubiquitin-conjugating enzyme]-L-cysteine + N(6)-ubiquitinyl-[acceptor protein]-L-lysine.. Its pathway is protein modification; protein ubiquitination. Its activity is regulated as follows. The E3 ubiquitin-protein ligase activity is inhibited by phosphorylation by AURKA. Activity is increased by phosphatase treatment. In terms of biological role, E3 ubiquitin-protein ligase that specifically mediates the formation of 'Lys-6'-linked polyubiquitin chains and plays a central role in DNA repair by facilitating cellular responses to DNA damage. It is unclear whether it also mediates the formation of other types of polyubiquitin chains. The BRCA1-BARD1 heterodimer coordinates a diverse range of cellular pathways such as DNA damage repair, ubiquitination and transcriptional regulation to maintain genomic stability. Regulates centrosomal microtubule nucleation. Required for appropriate cell cycle arrests after ionizing irradiation in both the S-phase and the G2 phase of the cell cycle. Required for FANCD2 targeting to sites of DNA damage. Inhibits lipid synthesis by binding to inactive phosphorylated ACACA and preventing its dephosphorylation. Contributes to homologous recombination repair (HRR) via its direct interaction with PALB2, fine-tunes recombinational repair partly through its modulatory role in the PALB2-dependent loading of BRCA2-RAD51 repair machinery at DNA breaks. Component of the BRCA1-RBBP8 complex which regulates CHEK1 activation and controls cell cycle G2/M checkpoints on DNA damage via BRCA1-mediated ubiquitination of RBBP8. Acts as a transcriptional activator. In Homo sapiens (Human), this protein is Breast cancer type 1 susceptibility protein (BRCA1).